The following is a 66-amino-acid chain: Cold shock protein CspC (66 aa).

Residues 4-63 enclose the CSD domain; sequence GTVKWFNAEKGFGFIERENGDDVFVHFSAIQSDGFKSLDEGQKVSFDVEQGARGAQAANV.

The protein localises to the cytoplasm. The protein is Cold shock protein CspC (cspC) of Bacillus subtilis (strain 168).